We begin with the raw amino-acid sequence, 341 residues long: Glycerol-3-phosphate dehydrogenase [NAD(P)+] (341 aa).

The NADPH site is built by S14, F15, R35, and K108. Sn-glycerol 3-phosphate contacts are provided by K108 and G136. A140 serves as a coordination point for NADPH. Positions 191, 244, 254, 255, and 256 each coordinate sn-glycerol 3-phosphate. Residue K191 is the Proton acceptor of the active site. R255 provides a ligand contact to NADPH. NADPH-binding residues include V279 and E281.

The protein belongs to the NAD-dependent glycerol-3-phosphate dehydrogenase family.

It localises to the cytoplasm. The catalysed reaction is sn-glycerol 3-phosphate + NAD(+) = dihydroxyacetone phosphate + NADH + H(+). The enzyme catalyses sn-glycerol 3-phosphate + NADP(+) = dihydroxyacetone phosphate + NADPH + H(+). Its pathway is membrane lipid metabolism; glycerophospholipid metabolism. Its function is as follows. Catalyzes the reduction of the glycolytic intermediate dihydroxyacetone phosphate (DHAP) to sn-glycerol 3-phosphate (G3P), the key precursor for phospholipid synthesis. In Pseudomonas putida (strain ATCC 47054 / DSM 6125 / CFBP 8728 / NCIMB 11950 / KT2440), this protein is Glycerol-3-phosphate dehydrogenase [NAD(P)+].